Consider the following 520-residue polypeptide: MQSRILDIHGNPFRFEADMQTESESRLMPLQYHYSDHPASGLTPAKAARILRAAEQGDLVAQAELAEDMEEKDTHILSELSKRRGAITAVDWQIKPPRNATPEEQRDAEMLQEILEDAVWLDDCIFDATDAILKGFSSQEIEWEQGLVGGLKLIKNVHWRDPAWFMTPAYQRNSLRLRDGTPEGAEMQQFGWVKHVARAKTGYLSRIGLVRTLVWPFIFKNYSVRDFAEFLEIYGLPLRLGKYPEGATDKEKQTLLRAVMSIGHNAGGIIPRGMELEFEKAADGSDSTFMAMIEWAEKSASKAILGGTLTSQADGATSTNALGNVHNDVRLEIRNADLKRLAATLTRDLVYPLYALNCKSFNDARRIPRFEFDVAESEDLNAFADGLNKLVDIGFRIPKQWAHDKLQVPIATENEEVLAKSFQNPTAYMHSKADGKMAVLSVQPDPEDLLDNLEPTAEDYQAVIDPLLKPVVEALQKGGYEFAQEKLAILYAEMNDEELETLLTRAIFVSDLLGRANAKR.

To phage Mu protein gp29.

The chain is Mu-like prophage FluMu protein gp29 from Haemophilus influenzae (strain ATCC 51907 / DSM 11121 / KW20 / Rd).